We begin with the raw amino-acid sequence, 306 residues long: Recombination-associated protein RdgC (306 aa).

Belongs to the RdgC family.

It is found in the cytoplasm. It localises to the nucleoid. Functionally, may be involved in recombination. The chain is Recombination-associated protein RdgC from Pseudomonas fluorescens (strain Pf0-1).